The primary structure comprises 505 residues: tRNA (guanine(6)-N(2))-methyltransferase THUMP3 (505 aa).

The interval 145 to 182 (KAKRRKANQSAGKEKADCGQGDKADEKDGKKKHASSTS) is disordered. Over residues 156-173 (GKEKADCGQGDKADEKDG) the composition is skewed to basic and acidic residues. The 117-residue stretch at 171–287 (KDGKKKHASS…DNEVIVAIAL (117 aa)) folds into the THUMP domain.

This sequence belongs to the methyltransferase superfamily. As to quaternary structure, part of the heterodimeric THUMPD3-TRM112 methyltransferase complex; this complex forms an active tRNA methyltransferase, where TRMT112 acts as an activator of the catalytic subunit THUMPD3. As to expression, ubiquitously expressed. Abundantly expressed in the testis, also expressed in the brain, heart, kidney, liver, lung, muscle and spleen.

The protein localises to the cytoplasm. It carries out the reaction guanosine(6) in tRNA + S-adenosyl-L-methionine = N(2)-methylguanosine(6) in tRNA + S-adenosyl-L-homocysteine + H(+). The catalysed reaction is guanosine(7) in tRNA + S-adenosyl-L-methionine = N(2)-methylguanosine(7) in tRNA + S-adenosyl-L-homocysteine + H(+). Its function is as follows. Catalytic subunit of the THUMPD3-TRM112 methyltransferase complex, that specifically mediates the S-adenosyl-L-methionine-dependent N(2)-methylation of guanosine nucleotide at position 6 (m2G6) in tRNAs. This is one of the major tRNA (guanine-N(2))-methyltransferases. Also catalyzes the S-adenosyl-L-methionine-dependent N(2)-methylation of guanosine nucleotide at position 7 of tRNA(Trp). In Mus musculus (Mouse), this protein is tRNA (guanine(6)-N(2))-methyltransferase THUMP3.